Reading from the N-terminus, the 779-residue chain is Pre-mRNA-splicing factor cef-1 (779 aa).

HTH myb-type domains are found at residues 1 to 56 (MPVV…DPSI) and 57 to 106 (KKIE…DEAE). 2 DNA-binding regions (H-T-H motif) span residues 29–52 (WARV…NEWL) and 80–102 (WRTI…QRLL). Disordered stretches follow at residues 113–192 (LGLT…ESRR), 246–284 (EYQR…PSVQ), 424–448 (TPLR…LRTP), and 497–525 (WELE…DRRE). The span at 127 to 152 (SADDVRKLRPGEVDPDPETKPARPDT) shows a compositional bias: basic and acidic residues. Residues 157–204 (EDEKEMLSEARARLANTQGKKAKRKARERQQEESRRLAALQKRRELKT) are a coiled coil. Basic and acidic residues-rich tracts occupy residues 246–256 (EYQRAHFDPKK) and 263–281 (RKGE…DKDP). Residues 653–772 (DEEEEQISTM…EELDALTLNG (120 aa)) adopt a coiled-coil conformation.

It belongs to the CEF1 family. As to quaternary structure, associated with the spliceosome.

It localises to the cytoplasm. The protein localises to the nucleus. Functionally, involved in pre-mRNA splicing and cell cycle control. This Neurospora crassa (strain ATCC 24698 / 74-OR23-1A / CBS 708.71 / DSM 1257 / FGSC 987) protein is Pre-mRNA-splicing factor cef-1 (cef-1).